We begin with the raw amino-acid sequence, 202 residues long: D-alanyl-D-alanine dipeptidase (202 aa).

Residues histidine 116 and aspartate 123 each coordinate Zn(2+). Residue glutamate 181 is the Proton donor/acceptor of the active site. Residue histidine 184 participates in Zn(2+) binding.

The protein belongs to the peptidase M15D family. Zn(2+) is required as a cofactor.

The catalysed reaction is D-alanyl-D-alanine + H2O = 2 D-alanine. In terms of biological role, catalyzes hydrolysis of the D-alanyl-D-alanine dipeptide. The polypeptide is D-alanyl-D-alanine dipeptidase (vanXB) (Enterococcus faecalis (strain ATCC 700802 / V583)).